Reading from the N-terminus, the 214-residue chain is Phosphatidylserine decarboxylase proenzyme (214 aa).

The active-site Schiff-base intermediate with substrate; via pyruvic acid is the S183. S183 carries the post-translational modification Pyruvic acid (Ser); by autocatalysis.

The protein belongs to the phosphatidylserine decarboxylase family. PSD-A subfamily. As to quaternary structure, heterodimer of a large membrane-associated beta subunit and a small pyruvoyl-containing alpha subunit. Pyruvate serves as cofactor. Post-translationally, is synthesized initially as an inactive proenzyme. Formation of the active enzyme involves a self-maturation process in which the active site pyruvoyl group is generated from an internal serine residue via an autocatalytic post-translational modification. Two non-identical subunits are generated from the proenzyme in this reaction, and the pyruvate is formed at the N-terminus of the alpha chain, which is derived from the carboxyl end of the proenzyme. The post-translation cleavage follows an unusual pathway, termed non-hydrolytic serinolysis, in which the side chain hydroxyl group of the serine supplies its oxygen atom to form the C-terminus of the beta chain, while the remainder of the serine residue undergoes an oxidative deamination to produce ammonia and the pyruvoyl prosthetic group on the alpha chain.

The protein localises to the cell membrane. It catalyses the reaction a 1,2-diacyl-sn-glycero-3-phospho-L-serine + H(+) = a 1,2-diacyl-sn-glycero-3-phosphoethanolamine + CO2. Its pathway is phospholipid metabolism; phosphatidylethanolamine biosynthesis; phosphatidylethanolamine from CDP-diacylglycerol: step 2/2. Catalyzes the formation of phosphatidylethanolamine (PtdEtn) from phosphatidylserine (PtdSer). This Syntrophotalea carbinolica (strain DSM 2380 / NBRC 103641 / GraBd1) (Pelobacter carbinolicus) protein is Phosphatidylserine decarboxylase proenzyme.